Reading from the N-terminus, the 278-residue chain is Large ribosomal subunit protein uL2 (278 aa).

The tract at residues 222–264 is disordered; the sequence is RGVAMNPVDHPHGGGEGRTSGGRNPVTPWGVPTKGKKTRSNKR.

The protein belongs to the universal ribosomal protein uL2 family. In terms of assembly, part of the 50S ribosomal subunit. Forms a bridge to the 30S subunit in the 70S ribosome.

In terms of biological role, one of the primary rRNA binding proteins. Required for association of the 30S and 50S subunits to form the 70S ribosome, for tRNA binding and peptide bond formation. It has been suggested to have peptidyltransferase activity; this is somewhat controversial. Makes several contacts with the 16S rRNA in the 70S ribosome. This Methylobacterium radiotolerans (strain ATCC 27329 / DSM 1819 / JCM 2831 / NBRC 15690 / NCIMB 10815 / 0-1) protein is Large ribosomal subunit protein uL2.